The sequence spans 240 residues: 4-hydroxy-tetrahydrodipicolinate reductase (240 aa).

Residues 79-81 (ATT) and 103-106 (SANM) each bind NAD(+). The active-site Proton donor/acceptor is H135. (S)-2,3,4,5-tetrahydrodipicolinate is bound at residue H136. K139 acts as the Proton donor in catalysis. Position 145 to 146 (145 to 146 (GT)) interacts with (S)-2,3,4,5-tetrahydrodipicolinate.

Belongs to the DapB family.

Its subcellular location is the cytoplasm. The catalysed reaction is (S)-2,3,4,5-tetrahydrodipicolinate + NAD(+) + H2O = (2S,4S)-4-hydroxy-2,3,4,5-tetrahydrodipicolinate + NADH + H(+). The enzyme catalyses (S)-2,3,4,5-tetrahydrodipicolinate + NADP(+) + H2O = (2S,4S)-4-hydroxy-2,3,4,5-tetrahydrodipicolinate + NADPH + H(+). It participates in amino-acid biosynthesis; L-lysine biosynthesis via DAP pathway; (S)-tetrahydrodipicolinate from L-aspartate: step 4/4. In terms of biological role, catalyzes the conversion of 4-hydroxy-tetrahydrodipicolinate (HTPA) to tetrahydrodipicolinate. The protein is 4-hydroxy-tetrahydrodipicolinate reductase of Staphylococcus aureus (strain JH1).